The chain runs to 199 residues: Inactive glutathione S-transferase D3 (199 aa).

Positions 1 to 64 (MVGKALGLEF…YLVEKYGKDD (64 aa)) constitute a GST N-terminal domain. Glutathione contacts are provided by residues 34-36 (HSI) and 48-50 (ESR). Positions 70-199 (DIQKQAVINQ…RIEEKQNAAK (130 aa)) constitute a GST C-terminal domain.

This sequence belongs to the GST superfamily. Delta family. As to quaternary structure, homodimer.

Its function is as follows. Has no glutathione S-transferase activity. This Drosophila melanogaster (Fruit fly) protein is Inactive glutathione S-transferase D3.